The chain runs to 201 residues: Putative toxin HigB2 (201 aa).

The protein belongs to the mycobacterial HigB family.

Functionally, putative toxic component of a type II toxin-antitoxin (TA) system. Its cognate antitoxin would be HigA2. In Mycobacterium tuberculosis (strain ATCC 25618 / H37Rv), this protein is Putative toxin HigB2.